Reading from the N-terminus, the 216-residue chain is Regulator of G-protein signaling 19 (216 aa).

The segment covering 1–19 (MPTPHEAEKQHTGPEEADR) has biased composition (basic and acidic residues). A disordered region spans residues 1–30 (MPTPHEAEKQHTGPEEADRPPSMSSHDAAP). S24 bears the Phosphoserine; by CK2 mark. The RGS domain maps to 90–206 (SFDKLMHSPT…LTSPTYRSLL (117 aa)). The residue at position 97 (S97) is a Phosphoserine. Residue S151 is modified to Phosphoserine; by MAPK1 and MAPK3. The interaction with GIPC stretch occupies residues 207-216 (LQGAPQSSEA).

Interacts with GIPC PDZ domain. Interacts with GNAO1. Fatty acylated. Heavily palmitoylated in the cysteine string motif. In terms of processing, phosphorylated, mainly on serine residues.

It localises to the membrane. Its function is as follows. Inhibits signal transduction by increasing the GTPase activity of G protein alpha subunits thereby driving them into their inactive GDP-bound form. Binds to G-alpha subfamily 1 members, predominantly to G(i)-alpha-3. Activity on G(z)-alpha is inhibited by phosphorylation and palmitoylation of the G-protein. The sequence is that of Regulator of G-protein signaling 19 (Rgs19) from Rattus norvegicus (Rat).